A 357-amino-acid polypeptide reads, in one-letter code: Probable dual-specificity RNA methyltransferase RlmN (357 aa).

Catalysis depends on E95, which acts as the Proton acceptor. The region spanning 106 to 340 (NRDRHTVCVS…VSVREEKGTD (235 aa)) is the Radical SAM core domain. Cysteines 113 and 345 form a disulfide. Residues C120, C124, and C127 each coordinate [4Fe-4S] cluster. Residues 172–173 (GE), S204, 227–229 (SLH), and N302 each bind S-adenosyl-L-methionine. C345 serves as the catalytic S-methylcysteine intermediate.

Belongs to the radical SAM superfamily. RlmN family. [4Fe-4S] cluster serves as cofactor.

It is found in the cytoplasm. It carries out the reaction adenosine(2503) in 23S rRNA + 2 reduced [2Fe-2S]-[ferredoxin] + 2 S-adenosyl-L-methionine = 2-methyladenosine(2503) in 23S rRNA + 5'-deoxyadenosine + L-methionine + 2 oxidized [2Fe-2S]-[ferredoxin] + S-adenosyl-L-homocysteine. The catalysed reaction is adenosine(37) in tRNA + 2 reduced [2Fe-2S]-[ferredoxin] + 2 S-adenosyl-L-methionine = 2-methyladenosine(37) in tRNA + 5'-deoxyadenosine + L-methionine + 2 oxidized [2Fe-2S]-[ferredoxin] + S-adenosyl-L-homocysteine. Specifically methylates position 2 of adenine 2503 in 23S rRNA and position 2 of adenine 37 in tRNAs. This is Probable dual-specificity RNA methyltransferase RlmN from Desulfitobacterium hafniense (strain DSM 10664 / DCB-2).